The primary structure comprises 269 residues: MPIQRIAITASANAPLTTTPVKIATRNLEFYYGTFQALKQINLEIPEKRVTALIGPSGCGKSTLLRIFNRIYALYPKLEARGEVFLDGENILSPKYSINRLRSKVGMVFQKPVPFPMTIYENVAYGIRHHEVMCKSQMNDRVEQALQQSALWEEVKDKLNQNALGLSGGQQQRLCIARAVALTPSVLLLDEPTSALDPISTSRIEQLIEELKTKYTIVIVTHNMQQAARVSDYTGFMYLGDLIEHDRTETIFSRPSKQQTEDYITGRFG.

The ABC transporter domain occupies 23 to 264; it reads IATRNLEFYY…PSKQQTEDYI (242 aa). Position 55-62 (55-62) interacts with ATP; that stretch reads GPSGCGKS.

This sequence belongs to the ABC transporter superfamily. Phosphate importer (TC 3.A.1.7) family. The complex is composed of two ATP-binding proteins (PstB), two transmembrane proteins (PstC and PstA) and a solute-binding protein (PstS).

The protein resides in the cell inner membrane. It carries out the reaction phosphate(out) + ATP + H2O = ADP + 2 phosphate(in) + H(+). Functionally, part of the ABC transporter complex PstSACB involved in phosphate import. Responsible for energy coupling to the transport system. In Xylella fastidiosa (strain Temecula1 / ATCC 700964), this protein is Phosphate import ATP-binding protein PstB.